The sequence spans 160 residues: Large ribosomal subunit protein uL22c (160 aa).

It belongs to the universal ribosomal protein uL22 family. As to quaternary structure, part of the 50S ribosomal subunit.

It is found in the plastid. Its subcellular location is the chloroplast. In terms of biological role, this protein binds specifically to 23S rRNA. Its function is as follows. The globular domain of the protein is located near the polypeptide exit tunnel on the outside of the subunit, while an extended beta-hairpin is found that lines the wall of the exit tunnel in the center of the 70S ribosome. The chain is Large ribosomal subunit protein uL22c (rpl22) from Capsella bursa-pastoris (Shepherd's purse).